Here is a 222-residue protein sequence, read N- to C-terminus: UPF0128 protein PYRAB08320 (222 aa).

It belongs to the UPF0128 family.

This chain is UPF0128 protein PYRAB08320, found in Pyrococcus abyssi (strain GE5 / Orsay).